A 316-amino-acid chain; its full sequence is tRNA-dihydrouridine(16) synthase (316 aa).

FMN contacts are provided by residues 7–9 (PME) and glutamine 68. Residue cysteine 98 is the Proton donor of the active site. Residues lysine 139, 200-202 (NGE), and 224-225 (GR) each bind FMN.

It belongs to the Dus family. DusC subfamily. FMN is required as a cofactor.

It catalyses the reaction 5,6-dihydrouridine(16) in tRNA + NADP(+) = uridine(16) in tRNA + NADPH + H(+). The catalysed reaction is 5,6-dihydrouridine(16) in tRNA + NAD(+) = uridine(16) in tRNA + NADH + H(+). Catalyzes the synthesis of 5,6-dihydrouridine (D), a modified base found in the D-loop of most tRNAs, via the reduction of the C5-C6 double bond in target uridines. Specifically modifies U16 in tRNAs. This Escherichia coli O157:H7 protein is tRNA-dihydrouridine(16) synthase.